A 447-amino-acid polypeptide reads, in one-letter code: Phosphoglucosamine mutase (447 aa).

S102 (phosphoserine intermediate) is an active-site residue. Mg(2+) is bound by residues S102, D241, D243, and D245. S102 bears the Phosphoserine mark.

Belongs to the phosphohexose mutase family. The cofactor is Mg(2+). In terms of processing, activated by phosphorylation.

It carries out the reaction alpha-D-glucosamine 1-phosphate = D-glucosamine 6-phosphate. Catalyzes the conversion of glucosamine-6-phosphate to glucosamine-1-phosphate. In Methylococcus capsulatus (strain ATCC 33009 / NCIMB 11132 / Bath), this protein is Phosphoglucosamine mutase.